Consider the following 368-residue polypeptide: MESIPARLNAVQEKILDLYEADSNDLNAQIEHWKLTRMECVLFYKAKELGITHIGHQVVPPMAVSKAKACQAIELQLALEALNKTQYSTDGWTLQQTSLEMWRAEPQKYFKKHGYTITVQYDNDKNNTMDYTNWKEIYLLGECECTIVEGQVDYYGLYYWCDGEKIYFVKFSNDAKQYCVTGVWEVHVGGQVIVCPASVSSNEVSTTETAVHLCTETSKTSAVSVGAKDTHLQPPQKRRRPDVTDSRNTKYPNNLLRGQQSVDSTTRGLVTATECTNKGRVAHTTCTAPIIHLKGDPNSLKCLRYRVKTHKSLYVQISSTWHWTSNECTNNKLGIVTITYSDETQRQQFLKTVKIPNTVQVIQGVMSL.

The transactivation domain stretch occupies residues Met1–Ser200. The segment at Val225–Leu255 is disordered. The DNA-binding domain stretch occupies residues Thr287–Leu368. Residue Lys294 forms a Glycyl lysine isopeptide (Lys-Gly) (interchain with G-Cter in SUMO) linkage.

The protein belongs to the papillomaviridae E2 protein family. As to quaternary structure, binds DNA as homodimer. Interacts with protein E1; this interaction greatly increases E1 DNA-binding activity. Interacts with protein L1; this interaction enhances E2-dependent replication and transcription activation. Interacts with protein L2; this interaction inhibits E2 transcriptional activity but not DNA replication function E2. Interacts with protein E7; this interaction inhibits E7 oncogenic activity. Interacts with host TAF1; this interaction modulates E2-dependent transcriptional regulation. Interacts with host BRD4; this interaction mediates E2 transcriptional activation function. Additionally, the interaction with host BRD4 on mitotic chromosomes mediates tethering of the viral genome. Interacts with host TOPBP1; this interaction is required for optimal viral DNA replication. In terms of processing, phosphorylated. Post-translationally, sumoylation plays a regulatory role in E2 transcriptional activity.

The protein resides in the host nucleus. Its function is as follows. Plays a role in the initiation of viral DNA replication. A dimer of E2 interacts with a dimer of E1 in order to improve specificity of E1 DNA binding activity. Once the complex recognizes and binds DNA at specific sites, the E2 dimer is removed from DNA. E2 also regulates viral transcription through binding to the E2RE response element (5'-ACCNNNNNNGGT-3') present in multiple copies in the regulatory regions of the viral genome. Activates or represses transcription depending on E2RE's position with regards to proximal promoter elements including the TATA-box. Repression occurs by sterically hindering the assembly of the transcription initiation complex. The protein is Regulatory protein E2 of Homo sapiens (Human).